The following is a 243-amino-acid chain: 7-cyano-7-deazaguanine synthase (243 aa).

18-28 (FSGGQDSATCL) is an ATP binding site. 4 residues coordinate Zn(2+): cysteine 206, cysteine 221, cysteine 224, and cysteine 227.

This sequence belongs to the QueC family. Zn(2+) is required as a cofactor.

The catalysed reaction is 7-carboxy-7-deazaguanine + NH4(+) + ATP = 7-cyano-7-deazaguanine + ADP + phosphate + H2O + H(+). It functions in the pathway purine metabolism; 7-cyano-7-deazaguanine biosynthesis. Its function is as follows. Catalyzes the ATP-dependent conversion of 7-carboxy-7-deazaguanine (CDG) to 7-cyano-7-deazaguanine (preQ(0)). The protein is 7-cyano-7-deazaguanine synthase of Methylorubrum extorquens (strain CM4 / NCIMB 13688) (Methylobacterium extorquens).